The following is a 250-amino-acid chain: Nuclear transcription factor Y subunit C-4 (250 aa).

The disordered stretch occupies residues 219–250; it reads GIAYGGQQGHPGYLWQDPQEQQEEPPAEQQSD. The segment covering 238-250 has biased composition (acidic residues); sequence EQQEEPPAEQQSD.

Belongs to the NFYC/HAP5 subunit family. As to quaternary structure, heterotrimeric transcription factor composed of three components, NF-YA, NF-YB and NF-YC. NF-YB and NF-YC must interact and dimerize for NF-YA association and DNA binding. Interacts with NFYB2. Interacts with NFYB8, NFYB10 and HD5/NFYB11.

Its subcellular location is the nucleus. The protein resides in the cytoplasm. In terms of biological role, probable transcription factor involved in the regulation of flowering time under long day (LD) conditions. Functions as a repressor of flowering, independently of HD1 and GHD7. Controls flowering time by negatively regulating the expression of EHD1 and HD3A. Component of the NF-Y/HAP transcription factor complex. This Oryza sativa subsp. japonica (Rice) protein is Nuclear transcription factor Y subunit C-4.